The primary structure comprises 598 residues: Elongation factor 4 (598 aa).

A tr-type G domain is found at 2–184 (KQIRNFSIIA…RLVKEIPAPE (183 aa)). GTP contacts are provided by residues 14–19 (DHGKST) and 131–134 (NKID).

The protein belongs to the TRAFAC class translation factor GTPase superfamily. Classic translation factor GTPase family. LepA subfamily.

It is found in the cell inner membrane. It carries out the reaction GTP + H2O = GDP + phosphate + H(+). In terms of biological role, required for accurate and efficient protein synthesis under certain stress conditions. May act as a fidelity factor of the translation reaction, by catalyzing a one-codon backward translocation of tRNAs on improperly translocated ribosomes. Back-translocation proceeds from a post-translocation (POST) complex to a pre-translocation (PRE) complex, thus giving elongation factor G a second chance to translocate the tRNAs correctly. Binds to ribosomes in a GTP-dependent manner. The protein is Elongation factor 4 of Photorhabdus laumondii subsp. laumondii (strain DSM 15139 / CIP 105565 / TT01) (Photorhabdus luminescens subsp. laumondii).